Reading from the N-terminus, the 349-residue chain is tRNA pseudouridine synthase D (349 aa).

Phenylalanine 27 serves as a coordination point for substrate. Aspartate 80 serves as the catalytic Nucleophile. A substrate-binding site is contributed by asparagine 129. One can recognise a TRUD domain in the interval 155–303 (GVPNYFGAQR…VEAARRAMLL (149 aa)). Substrate is bound at residue phenylalanine 329.

It belongs to the pseudouridine synthase TruD family.

The catalysed reaction is uridine(13) in tRNA = pseudouridine(13) in tRNA. Responsible for synthesis of pseudouridine from uracil-13 in transfer RNAs. The sequence is that of tRNA pseudouridine synthase D from Escherichia coli O127:H6 (strain E2348/69 / EPEC).